An 885-amino-acid chain; its full sequence is Cytosolic carboxypeptidase-like protein 5 (885 aa).

Residues 157 to 570 (YPFSYSDCQD…AMAIAALDMA (414 aa)) enclose the Peptidase M14 domain. 2 residues coordinate Zn(2+): His252 and Glu255. The interval 343–402 (NSQSPSEHQHSSHLPPDAPLSDPEKADSLQNRAHLGRSSSGDKPEAWTQTEVAEQKPNSV) is disordered. Over residues 388 to 402 (AWTQTEVAEQKPNSV) the composition is skewed to polar residues. His434 is a binding site for Zn(2+). The active-site Proton donor/acceptor is the Glu516. 2 disordered regions span residues 605–733 (TTVN…LASS) and 783–839 (RLQA…PRPC). Residues 620–640 (PPRSNNGLPVSCSENTLSRAR) are compositionally biased toward polar residues. 2 stretches are compositionally biased toward low complexity: residues 641-666 (SFSTGTSAGGSSSSQQNSPQMKNSPS) and 714-733 (PTSSSLAPSPTPASSNLASS). Residue Ser840 is modified to Phosphoserine.

The protein belongs to the peptidase M14 family. Zn(2+) serves as cofactor.

The protein localises to the cytoplasm. The protein resides in the cytosol. It is found in the nucleus. It localises to the cytoskeleton. Its subcellular location is the spindle. The protein localises to the midbody. It catalyses the reaction gamma-L-glutamyl-L-glutamyl-[protein] + H2O = L-glutamyl-[protein] + L-glutamate. The enzyme catalyses (L-glutamyl)(n+1)-gamma-L-glutamyl-L-glutamyl-[protein] + H2O = (L-glutamyl)(n)-gamma-L-glutamyl-L-glutamyl-[protein] + L-glutamate. It carries out the reaction C-terminal L-alpha-aminoacyl-L-glutamyl-[tubulin] + H2O = C-terminal L-alpha-aminoacyl-[tubulin] + L-glutamate. The catalysed reaction is C-terminal L-alpha-aminoacyl-L-glutamyl-L-glutamyl-[tubulin] + H2O = C-terminal L-alpha-aminoacyl-L-glutamyl-[tubulin] + L-glutamate. Its function is as follows. Metallocarboxypeptidase that mediates deglutamylation of tubulin and non-tubulin target proteins. Catalyzes the removal of polyglutamate side chains present on the gamma-carboxyl group of glutamate residues within the C-terminal tail of alpha- and beta-tubulin. Cleaves alpha- and gamma-linked polyglutamate tubulin side-chain, as well as the branching point glutamate. Also catalyzes the removal of alpha-linked glutamate residues from the carboxy-terminus of alpha-tubulin. Mediates deglutamylation of nucleotidyltransferase CGAS, leading to CGAS antiviral defense response activation. In Bos taurus (Bovine), this protein is Cytosolic carboxypeptidase-like protein 5 (AGBL5).